The primary structure comprises 166 residues: Large ribosomal subunit protein uL10 (166 aa).

This sequence belongs to the universal ribosomal protein uL10 family. In terms of assembly, part of the ribosomal stalk of the 50S ribosomal subunit. The N-terminus interacts with L11 and the large rRNA to form the base of the stalk. The C-terminus forms an elongated spine to which L12 dimers bind in a sequential fashion forming a multimeric L10(L12)X complex.

Functionally, forms part of the ribosomal stalk, playing a central role in the interaction of the ribosome with GTP-bound translation factors. The sequence is that of Large ribosomal subunit protein uL10 from Listeria monocytogenes serotype 4b (strain CLIP80459).